We begin with the raw amino-acid sequence, 3459 residues long: uncharacterized protein (3459 aa).

Acidic residues predominate over residues 158–167 (NDDDWIFNED). 2 disordered regions span residues 158-230 (NDDD…NNNN) and 400-447 (YGYI…NDEK). The segment covering 168–184 (DEKKNKNNDGNDNRYDY) has biased composition (basic and acidic residues). The segment covering 185-201 (NDLQNNNNNDNNKYDYN) has biased composition (low complexity). Residues 204 to 221 (DDEKKNKNNDGDDNKYDY) show a composition bias toward basic and acidic residues. The span at 406–443 (DNDDGDDYNDDNDNDDNYNDDNYNDDNYNDDNYNDDNY) shows a compositional bias: acidic residues. The stretch at 771 to 851 (VNEKKKGENE…NEMNKDEENE (81 aa)) forms a coiled coil. The chain crosses the membrane as a helical span at residues 1059 to 1079 (LIYMIYLFFTYKKYDLLLMFI). Disordered regions lie at residues 1148–1187 (RRQE…NDYD), 1399–1467 (IPTQ…NDDD), and 1711–1733 (QKKK…NKEN). Residues 1404-1463 (DKNETDEGNKNETDEGDKNETDEGDKNETDEGNKNETEEIYKNETDEGNKNETEEIYKND) show a composition bias toward basic and acidic residues. Transmembrane regions (helical) follow at residues 2059-2079 (FLLF…IFFF) and 2197-2217 (IIQC…DFLF). Disordered stretches follow at residues 2582-2644 (IYKD…DNNN) and 2776-2835 (GRIW…DKGD). Positions 2592 to 2629 (DNNDDDNINDDDNINDDDNINDDDNNNDDDNNNDDNND) are enriched in acidic residues. The span at 2779–2821 (WKREENGEKKKNEKNESEKNERNEKNEKNEKHEKHEKHEKNEK) shows a compositional bias: basic and acidic residues. The stretch at 2785-2820 (GEKKKNEKNESEKNERNEKNEKNEKHEKHEKHEKNE) forms a coiled coil. Helical transmembrane passes span 3229-3249 (LFII…SFIL) and 3296-3316 (LLFF…NINS).

It localises to the membrane. This is an uncharacterized protein from Plasmodium falciparum (isolate 3D7).